A 435-amino-acid chain; its full sequence is AMSH-like protease sst2 (435 aa).

The span at 162-181 shows a compositional bias: low complexity; the sequence is TDLLSPDSQKLSKSSSDLPQ. A disordered region spans residues 162–185; sequence TDLLSPDSQKLSKSSSDLPQFDYP. Thr-192 is subject to Phosphothreonine. The region spanning 262–392 is the MPN domain; that stretch reads TIYLPKLLKK…FRLLDPEGLQ (131 aa). Residues His-341, His-343, Asp-354, His-356, Cys-397, His-404, and His-406 each contribute to the Zn(2+) site. The short motif at 341 to 354 is the JAMM motif element; the sequence is HTHPTQTCFMSSVD.

The protein belongs to the peptidase M67C family. The cofactor is Zn(2+).

It localises to the cytoplasm. The protein localises to the endosome. Zinc metalloprotease that specifically cleaves 'Lys-63'-linked polyubiquitin chains. Does not cleave 'Lys-48'-linked polyubiquitin chains. Plays a role in the multivesicular body (MVB) sorting pathway. Required for ubiquitin-dependent sorting of proteins into the endosome and subsequent trafficking to the vacuole. May regulate MVB sorting through deubiquitination of ubiquitinated ESCRT proteins. This Schizosaccharomyces pombe (strain 972 / ATCC 24843) (Fission yeast) protein is AMSH-like protease sst2 (sst2).